Consider the following 325-residue polypeptide: All-trans-nonaprenyl-diphosphate synthase (geranyl-diphosphate specific) (325 aa).

Lys-48, Arg-51, and His-81 together coordinate isopentenyl diphosphate. Mg(2+)-binding residues include Asp-88 and Asp-92. Residue Arg-97 coordinates an all-trans-polyprenyl diphosphate. An isopentenyl diphosphate-binding site is contributed by Arg-98. An all-trans-polyprenyl diphosphate-binding residues include Lys-174, Thr-175, Gln-211, and Lys-228.

It belongs to the FPP/GGPP synthase family. As to quaternary structure, homodimer. Mg(2+) is required as a cofactor.

The catalysed reaction is 7 isopentenyl diphosphate + (2E)-geranyl diphosphate = all-trans-nonaprenyl diphosphate + 7 diphosphate. Functionally, catalyzes the sequential condensation of isopentenyl diphosphate (IPP) with the allylic substrate to give solanesyl diphosphate. Could be important to determine the side chain length of ubiquinone. This chain is All-trans-nonaprenyl-diphosphate synthase (geranyl-diphosphate specific) (sdsA), found in Rhodobacter capsulatus (Rhodopseudomonas capsulata).